The following is a 248-amino-acid chain: Isoprenyl transferase (248 aa).

Asp-23 is an active-site residue. A Mg(2+)-binding site is contributed by Asp-23. Substrate contacts are provided by residues 24 to 27 (GNGR), Trp-28, Arg-36, His-40, and 68 to 70 (STE). The active-site Proton acceptor is the Asn-71. Residues Trp-72, Arg-74, Arg-185, and 191–193 (RIS) each bind substrate. Glu-204 is a Mg(2+) binding site.

Belongs to the UPP synthase family. In terms of assembly, homodimer. Requires Mg(2+) as cofactor.

Functionally, catalyzes the condensation of isopentenyl diphosphate (IPP) with allylic pyrophosphates generating different type of terpenoids. This is Isoprenyl transferase from Neisseria meningitidis serogroup A / serotype 4A (strain DSM 15465 / Z2491).